A 308-amino-acid chain; its full sequence is 4-diphosphocytidyl-2-C-methyl-D-erythritol kinase (308 aa).

Residue Lys-24 is part of the active site. 118 to 128 (PVGAGMAGGSA) is an ATP binding site. Residue Asp-160 is part of the active site.

The protein belongs to the GHMP kinase family. IspE subfamily.

The enzyme catalyses 4-CDP-2-C-methyl-D-erythritol + ATP = 4-CDP-2-C-methyl-D-erythritol 2-phosphate + ADP + H(+). It participates in isoprenoid biosynthesis; isopentenyl diphosphate biosynthesis via DXP pathway; isopentenyl diphosphate from 1-deoxy-D-xylulose 5-phosphate: step 3/6. Its function is as follows. Catalyzes the phosphorylation of the position 2 hydroxy group of 4-diphosphocytidyl-2C-methyl-D-erythritol. This chain is 4-diphosphocytidyl-2-C-methyl-D-erythritol kinase, found in Bifidobacterium adolescentis (strain ATCC 15703 / DSM 20083 / NCTC 11814 / E194a).